The following is a 441-amino-acid chain: Serine carboxypeptidase-like 4 (441 aa).

A signal peptide spans 1-29; that stretch reads MANNNVYSVLKSLLLLLHLVFLSKQHVDS. 3 disulfides stabilise this stretch: Cys-88-Cys-331, Cys-252-Cys-266, and Cys-290-Cys-297. An N-linked (GlcNAc...) asparagine glycan is attached at Asn-109. Residue Ser-184 is part of the active site. Asn-350 carries N-linked (GlcNAc...) asparagine glycosylation. The active site involves Asp-366. An N-linked (GlcNAc...) asparagine glycan is attached at Asn-382. His-419 is a catalytic residue.

The protein belongs to the peptidase S10 family. Ubiquitous.

It is found in the secreted. Its function is as follows. Probable carboxypeptidase. The polypeptide is Serine carboxypeptidase-like 4 (SCPL4) (Arabidopsis thaliana (Mouse-ear cress)).